Here is a 260-residue protein sequence, read N- to C-terminus: NAD-capped RNA hydrolase NudC (260 aa).

2 residues coordinate substrate: K25 and R69. Residues C98 and C101 each coordinate Zn(2+). Residue E111 coordinates substrate. Positions 116 and 119 each coordinate Zn(2+). Y124 is a binding site for substrate. One can recognise a Nudix hydrolase domain in the interval 125–248; the sequence is PQIAPCVIVA…TVARRLIEDT (124 aa). A divalent metal cation-binding residues include A158, E174, and E178. Residues 159–180 carry the Nudix box motif; the sequence is GFVEVGETLEQAVSREVLEESN. Position 192–199 (192–199) interacts with substrate; the sequence is QPWPFPHS. E219 is a binding site for a divalent metal cation. A241 contacts substrate.

It belongs to the Nudix hydrolase family. NudC subfamily. As to quaternary structure, homodimer. The cofactor is Mg(2+). Mn(2+) is required as a cofactor. Requires Zn(2+) as cofactor.

The enzyme catalyses a 5'-end NAD(+)-phospho-ribonucleoside in mRNA + H2O = a 5'-end phospho-adenosine-phospho-ribonucleoside in mRNA + beta-nicotinamide D-ribonucleotide + 2 H(+). It catalyses the reaction NAD(+) + H2O = beta-nicotinamide D-ribonucleotide + AMP + 2 H(+). It carries out the reaction NADH + H2O = reduced beta-nicotinamide D-ribonucleotide + AMP + 2 H(+). Its function is as follows. mRNA decapping enzyme that specifically removes the nicotinamide adenine dinucleotide (NAD) cap from a subset of mRNAs by hydrolyzing the diphosphate linkage to produce nicotinamide mononucleotide (NMN) and 5' monophosphate mRNA. The NAD-cap is present at the 5'-end of some mRNAs and stabilizes RNA against 5'-processing. Has preference for mRNAs with a 5'-end purine. Catalyzes the hydrolysis of a broad range of dinucleotide pyrophosphates. The polypeptide is NAD-capped RNA hydrolase NudC (Yersinia pestis bv. Antiqua (strain Antiqua)).